Here is a 648-residue protein sequence, read N- to C-terminus: Macrolide export ATP-binding/permease protein MacB (648 aa).

One can recognise an ABC transporter domain in the interval Leu5–Thr243. Residue Gly41–Ser48 participates in ATP binding. 4 consecutive transmembrane segments (helical) span residues Leu273–Gly293, Leu523–Ile543, Ala576–Phe596, and Pro611–Leu631.

This sequence belongs to the ABC transporter superfamily. Macrolide exporter (TC 3.A.1.122) family. In terms of assembly, homodimer. Part of the tripartite efflux system MacAB-TolC, which is composed of an inner membrane transporter, MacB, a periplasmic membrane fusion protein, MacA, and an outer membrane component, TolC. The complex forms a large protein conduit and can translocate molecules across both the inner and outer membranes. Interacts with MacA.

It localises to the cell inner membrane. Its function is as follows. Part of the tripartite efflux system MacAB-TolC. MacB is a non-canonical ABC transporter that contains transmembrane domains (TMD), which form a pore in the inner membrane, and an ATP-binding domain (NBD), which is responsible for energy generation. Confers resistance against macrolides. The chain is Macrolide export ATP-binding/permease protein MacB from Escherichia coli (strain UTI89 / UPEC).